Consider the following 24-residue polypeptide: VEQDPYEIVIKQLERAAQYMEISE.

It belongs to the Glu/Leu/Phe/Val dehydrogenases family. In terms of assembly, homohexamer.

The protein resides in the cytoplasm. It catalyses the reaction L-glutamate + NAD(+) + H2O = 2-oxoglutarate + NH4(+) + NADH + H(+). It carries out the reaction L-glutamate + NADP(+) + H2O = 2-oxoglutarate + NH4(+) + NADPH + H(+). This Pyrococcus woesei protein is Glutamate dehydrogenase (gdhA).